A 300-amino-acid chain; its full sequence is Dihydroorotate dehydrogenase B (NAD(+)), catalytic subunit (300 aa).

Residues S20 and 44 to 45 each bind FMN; that span reads KS. Substrate is bound by residues K44, 68–72, and N122; that span reads NAMGL. N122 is a binding site for FMN. C125 functions as the Nucleophile in the catalytic mechanism. The FMN site is built by K160 and I186. 187–188 lines the substrate pocket; that stretch reads NT. FMN-binding positions include G212, 238-239, and 260-261; these read GG and GT.

The protein belongs to the dihydroorotate dehydrogenase family. Type 1 subfamily. Heterotetramer of 2 PyrK and 2 PyrD type B subunits. The cofactor is FMN.

It is found in the cytoplasm. It catalyses the reaction (S)-dihydroorotate + NAD(+) = orotate + NADH + H(+). It functions in the pathway pyrimidine metabolism; UMP biosynthesis via de novo pathway; orotate from (S)-dihydroorotate (NAD(+) route): step 1/1. Functionally, catalyzes the conversion of dihydroorotate to orotate with NAD(+) as electron acceptor. This is Dihydroorotate dehydrogenase B (NAD(+)), catalytic subunit (pyrD) from Pyrococcus furiosus (strain ATCC 43587 / DSM 3638 / JCM 8422 / Vc1).